A 446-amino-acid polypeptide reads, in one-letter code: Na(+)-translocating NADH-quinone reductase subunit A (446 aa).

The protein belongs to the NqrA family. In terms of assembly, composed of six subunits; NqrA, NqrB, NqrC, NqrD, NqrE and NqrF.

It carries out the reaction a ubiquinone + n Na(+)(in) + NADH + H(+) = a ubiquinol + n Na(+)(out) + NAD(+). Its activity is regulated as follows. This reaction is tightly coupled to the Na(+) pumping activity and specifically requires Na(+) for activity. Inhibited by korormicin and 2-N-heptyl-4-hydroxyquinoline N-oxide (HQNO). Its function is as follows. NQR complex catalyzes the reduction of ubiquinone-1 to ubiquinol by two successive reactions, coupled with the transport of Na(+) ions from the cytoplasm to the periplasm. NqrA to NqrE are probably involved in the second step, the conversion of ubisemiquinone to ubiquinol. This Vibrio alginolyticus protein is Na(+)-translocating NADH-quinone reductase subunit A.